The following is a 434-amino-acid chain: 3-phosphoshikimate 1-carboxyvinyltransferase (434 aa).

Positions 22, 23, and 27 each coordinate 3-phosphoshikimate. Position 22 (Lys22) interacts with phosphoenolpyruvate. 2 residues coordinate phosphoenolpyruvate: Gly94 and Arg122. Ser167, Gln169, Asp314, and Lys341 together coordinate 3-phosphoshikimate. Gln169 is a phosphoenolpyruvate binding site. The active-site Proton acceptor is Asp314. The phosphoenolpyruvate site is built by Arg345 and Arg391.

This sequence belongs to the EPSP synthase family. As to quaternary structure, monomer.

Its subcellular location is the cytoplasm. The catalysed reaction is 3-phosphoshikimate + phosphoenolpyruvate = 5-O-(1-carboxyvinyl)-3-phosphoshikimate + phosphate. It functions in the pathway metabolic intermediate biosynthesis; chorismate biosynthesis; chorismate from D-erythrose 4-phosphate and phosphoenolpyruvate: step 6/7. Its function is as follows. Catalyzes the transfer of the enolpyruvyl moiety of phosphoenolpyruvate (PEP) to the 5-hydroxyl of shikimate-3-phosphate (S3P) to produce enolpyruvyl shikimate-3-phosphate and inorganic phosphate. The polypeptide is 3-phosphoshikimate 1-carboxyvinyltransferase (Leuconostoc mesenteroides subsp. mesenteroides (strain ATCC 8293 / DSM 20343 / BCRC 11652 / CCM 1803 / JCM 6124 / NCDO 523 / NBRC 100496 / NCIMB 8023 / NCTC 12954 / NRRL B-1118 / 37Y)).